The primary structure comprises 277 residues: Shikimate dehydrogenase (NADP(+)) (277 aa).

Shikimate is bound by residues Ser15–Ser17 and Thr62. Lys66 serves as the catalytic Proton acceptor. Shikimate contacts are provided by Asn87 and Asp102. Residues Gly127 to Ala131, Asn151 to Lys156, and Ile219 contribute to the NADP(+) site. Tyr221 contributes to the shikimate binding site. Gly242 contacts NADP(+).

This sequence belongs to the shikimate dehydrogenase family. Homodimer.

It carries out the reaction shikimate + NADP(+) = 3-dehydroshikimate + NADPH + H(+). Its pathway is metabolic intermediate biosynthesis; chorismate biosynthesis; chorismate from D-erythrose 4-phosphate and phosphoenolpyruvate: step 4/7. Involved in the biosynthesis of the chorismate, which leads to the biosynthesis of aromatic amino acids. Catalyzes the reversible NADPH linked reduction of 3-dehydroshikimate (DHSA) to yield shikimate (SA). The chain is Shikimate dehydrogenase (NADP(+)) from Bacillus cereus (strain ZK / E33L).